Here is a 759-residue protein sequence, read N- to C-terminus: LON peptidase N-terminal domain and RING finger protein 3 (759 aa).

Residues 1–69 (MESVRIEQML…PGTSTPESKV (69 aa)) are disordered. Over residues 57–66 (EQSPGTSTPE) the composition is skewed to polar residues. The stretch at 67–100 (SKVLLTQADALASRGRIREALEVYRQLSERQQLV) is one TPR 1 repeat. The segment at 158–196 (CRKCHGFLSDPVSLSCGHTFCKLCLERGRAADRRCALCG) adopts an RING-type 1 zinc-finger fold. TPR repeat units follow at residues 243-276 (ASQL…APND), 278-310 (LLYS…RPMG), and 312-344 (KAHF…DGKN). Positions 360 to 454 (HCSSQEEAAA…TDQGDKPALS (95 aa)) are disordered. Positions 380 to 393 (AKVKGDGQQHHMKD) are enriched in basic and acidic residues. An RING-type 2 zinc finger spans residues 467 to 505 (CALCMRLFYEPVTTPCGHTFCLKCLERCLDHNAKCPLCK). The Lon N-terminal domain maps to 546–755 (MEELSNLNKN…GIRRVLAFIS (210 aa)).

The polypeptide is LON peptidase N-terminal domain and RING finger protein 3 (LONRF3) (Homo sapiens (Human)).